We begin with the raw amino-acid sequence, 180 residues long: CDP-archaeol synthase (180 aa).

The next 5 helical transmembrane spans lie at 5 to 25 (LVAT…AAVL), 54 to 74 (AVGT…AEPA), 78 to 98 (LGVD…FGAM), 118 to 138 (AFPG…VFVV), and 142 to 162 (WALA…TPIL).

This sequence belongs to the CDP-archaeol synthase family. Mg(2+) is required as a cofactor.

The protein localises to the cell membrane. The catalysed reaction is 2,3-bis-O-(geranylgeranyl)-sn-glycerol 1-phosphate + CTP + H(+) = CDP-2,3-bis-O-(geranylgeranyl)-sn-glycerol + diphosphate. It participates in membrane lipid metabolism; glycerophospholipid metabolism. Its function is as follows. Catalyzes the formation of CDP-2,3-bis-(O-geranylgeranyl)-sn-glycerol (CDP-archaeol) from 2,3-bis-(O-geranylgeranyl)-sn-glycerol 1-phosphate (DGGGP) and CTP. This reaction is the third ether-bond-formation step in the biosynthesis of archaeal membrane lipids. This Halorubrum lacusprofundi (strain ATCC 49239 / DSM 5036 / JCM 8891 / ACAM 34) protein is CDP-archaeol synthase.